A 429-amino-acid polypeptide reads, in one-letter code: Alanine aminotransferase (429 aa).

Residues Gly-65 and Asn-204 each coordinate L-alanine. Lys-265 bears the N6-(pyridoxal phosphate)lysine mark. Arg-403 serves as a coordination point for L-alanine.

It belongs to the class-I pyridoxal-phosphate-dependent aminotransferase family. As to quaternary structure, homodimer. Pyridoxal 5'-phosphate is required as a cofactor.

It is found in the cytoplasm. The enzyme catalyses L-alanine + 2-oxoglutarate = pyruvate + L-glutamate. The chain is Alanine aminotransferase (aspC) from Mycobacterium bovis (strain ATCC BAA-935 / AF2122/97).